The following is a 655-amino-acid chain: p-hydroxybenzoic acid efflux pump subunit AaeB (655 aa).

Helical transmembrane passes span Phe13–Leu33, Trp38–Pro58, Leu69–Ile89, Leu93–Val113, Trp121–Leu141, Glu152–Ile172, Leu370–Val390, Phe407–Pro427, Gln431–Val451, Leu459–Phe479, and Phe482–Leu502.

This sequence belongs to the aromatic acid exporter ArAE (TC 2.A.85) family.

It is found in the cell inner membrane. Functionally, forms an efflux pump with AaeA. Could function as a metabolic relief valve, allowing to eliminate certain compounds when they accumulate to high levels in the cell. This is p-hydroxybenzoic acid efflux pump subunit AaeB from Enterobacter cloacae subsp. cloacae (strain ATCC 13047 / DSM 30054 / NBRC 13535 / NCTC 10005 / WDCM 00083 / NCDC 279-56).